The primary structure comprises 614 residues: 1-deoxy-D-xylulose-5-phosphate synthase (614 aa).

Thiamine diphosphate is bound by residues histidine 74 and 115-117 (AHS). Aspartate 146 contacts Mg(2+). Thiamine diphosphate-binding positions include 147-148 (GA), asparagine 175, tyrosine 282, and glutamate 363. A Mg(2+)-binding site is contributed by asparagine 175.

The protein belongs to the transketolase family. DXPS subfamily. As to quaternary structure, homodimer. Mg(2+) is required as a cofactor. It depends on thiamine diphosphate as a cofactor.

The enzyme catalyses D-glyceraldehyde 3-phosphate + pyruvate + H(+) = 1-deoxy-D-xylulose 5-phosphate + CO2. Its pathway is metabolic intermediate biosynthesis; 1-deoxy-D-xylulose 5-phosphate biosynthesis; 1-deoxy-D-xylulose 5-phosphate from D-glyceraldehyde 3-phosphate and pyruvate: step 1/1. Catalyzes the acyloin condensation reaction between C atoms 2 and 3 of pyruvate and glyceraldehyde 3-phosphate to yield 1-deoxy-D-xylulose-5-phosphate (DXP). The chain is 1-deoxy-D-xylulose-5-phosphate synthase from Nitrosospira multiformis (strain ATCC 25196 / NCIMB 11849 / C 71).